The following is a 242-amino-acid chain: Ubiquinone biosynthesis O-methyltransferase (242 aa).

Positions 44, 64, 85, and 129 each coordinate S-adenosyl-L-methionine.

This sequence belongs to the methyltransferase superfamily. UbiG/COQ3 family.

It carries out the reaction a 3-demethylubiquinol + S-adenosyl-L-methionine = a ubiquinol + S-adenosyl-L-homocysteine + H(+). The enzyme catalyses a 3-(all-trans-polyprenyl)benzene-1,2-diol + S-adenosyl-L-methionine = a 2-methoxy-6-(all-trans-polyprenyl)phenol + S-adenosyl-L-homocysteine + H(+). Its pathway is cofactor biosynthesis; ubiquinone biosynthesis. O-methyltransferase that catalyzes the 2 O-methylation steps in the ubiquinone biosynthetic pathway. This chain is Ubiquinone biosynthesis O-methyltransferase, found in Yersinia pseudotuberculosis serotype O:1b (strain IP 31758).